The chain runs to 117 residues: UPF0122 protein Teth39_1278 (117 aa).

Belongs to the UPF0122 family.

Might take part in the signal recognition particle (SRP) pathway. This is inferred from the conservation of its genetic proximity to ftsY/ffh. May be a regulatory protein. The sequence is that of UPF0122 protein Teth39_1278 from Thermoanaerobacter pseudethanolicus (strain ATCC 33223 / 39E) (Clostridium thermohydrosulfuricum).